The chain runs to 420 residues: Methanogen homoaconitase large subunit (420 aa).

Positions 302, 362, and 365 each coordinate [4Fe-4S] cluster.

The protein belongs to the aconitase/IPM isomerase family. LeuC type 2 subfamily. Heterotetramer of 2 HacA and 2 HacB proteins. The cofactor is [4Fe-4S] cluster.

The catalysed reaction is (2R)-homocitrate = (2R,3S)-homoisocitrate. The enzyme catalyses (2R)-homocitrate = cis-homoaconitate + H2O. It catalyses the reaction (2R,3S)-homoisocitrate = cis-homoaconitate + H2O. It carries out the reaction cis-(homo)2aconitate + H2O = (2R,3S)-iso(homo)2citrate. The catalysed reaction is cis-(homo)3aconitate + H2O = (2R,3S)-iso(homo)3citrate. The enzyme catalyses (R)-malate = maleate + H2O. It catalyses the reaction cis-aconitate + H2O = D-threo-isocitrate. It functions in the pathway organic acid metabolism; 2-oxosuberate biosynthesis. Functionally, component of a hydro-lyase with broad substrate specificity for cis-unsaturated tricarboxylic acids. Catalyzes both the reversible dehydration of (R)-homocitrate ((R)-2-hydroxybutane-1,2,4-tricarboxylate) to produce cis-homoaconitate ((Z)-but-1-ene-1,2,4-tricarboxylate), and its hydration to homoisocitrate ((1R,2S)-1-hydroxybutane-1,2,4-tricarboxylate). Is also able to hydrate the analogous longer chain substrates cis-homo(2)-aconitate, cis-homo(3)-aconitate, and even the non-physiological cis-homo(4)-aconitate with similar efficiency. These reactions are part of the biosynthesis pathway of coenzyme B. Can also catalyze the hydration of maleate to (R)-malate, and that of cis-aconitate. Cannot catalyze the hydration of citraconate and the dehydration of (S)-homocitrate, citramalate, 2-isopropylmalate, 3-isopropylmalate, citrate or threo-DL-isocitrate. This is Methanogen homoaconitase large subunit (hacA) from Methanocaldococcus jannaschii (strain ATCC 43067 / DSM 2661 / JAL-1 / JCM 10045 / NBRC 100440) (Methanococcus jannaschii).